The chain runs to 706 residues: Elongation factor G (706 aa).

One can recognise a tr-type G domain in the interval 8–290 (NRYRNIGICA…AVIDYLPAPT (283 aa)). Residues 17–24 (AHVDAGKT), 88–92 (DTPGH), and 142–145 (NKMD) each bind GTP.

This sequence belongs to the TRAFAC class translation factor GTPase superfamily. Classic translation factor GTPase family. EF-G/EF-2 subfamily.

The protein localises to the cytoplasm. Its function is as follows. Catalyzes the GTP-dependent ribosomal translocation step during translation elongation. During this step, the ribosome changes from the pre-translocational (PRE) to the post-translocational (POST) state as the newly formed A-site-bound peptidyl-tRNA and P-site-bound deacylated tRNA move to the P and E sites, respectively. Catalyzes the coordinated movement of the two tRNA molecules, the mRNA and conformational changes in the ribosome. This is Elongation factor G from Stutzerimonas stutzeri (strain A1501) (Pseudomonas stutzeri).